The following is a 425-amino-acid chain: Serine hydroxymethyltransferase (425 aa).

Residues Leu-124 and 128 to 130 (GHL) each bind (6S)-5,6,7,8-tetrahydrofolate. Lys-233 bears the N6-(pyridoxal phosphate)lysine mark.

This sequence belongs to the SHMT family. Homodimer. Pyridoxal 5'-phosphate is required as a cofactor.

The protein localises to the cytoplasm. It carries out the reaction (6R)-5,10-methylene-5,6,7,8-tetrahydrofolate + glycine + H2O = (6S)-5,6,7,8-tetrahydrofolate + L-serine. The protein operates within one-carbon metabolism; tetrahydrofolate interconversion. Its pathway is amino-acid biosynthesis; glycine biosynthesis; glycine from L-serine: step 1/1. Catalyzes the reversible interconversion of serine and glycine with tetrahydrofolate (THF) serving as the one-carbon carrier. This reaction serves as the major source of one-carbon groups required for the biosynthesis of purines, thymidylate, methionine, and other important biomolecules. Also exhibits THF-independent aldolase activity toward beta-hydroxyamino acids, producing glycine and aldehydes, via a retro-aldol mechanism. This chain is Serine hydroxymethyltransferase, found in Clavibacter michiganensis subsp. michiganensis (strain NCPPB 382).